The following is a 340-amino-acid chain: Guanine nucleotide-binding protein subunit beta-4 (340 aa).

Position 2 is an N-acetylserine (Ser-2). Ser-2 is modified (phosphoserine). WD repeat units lie at residues 53-92 (GHLA…KMHA), 95-134 (LRSS…GNVR), 141-179 (GHTG…QTTT), 182-221 (GHSG…CRQS), and 224-263 (GHVS…ELLL). The residue at position 266 (His-266) is a Phosphohistidine. WD repeat units follow at residues 268-307 (NIIC…RAGV) and 310-339 (GHDN…LRIW).

This sequence belongs to the WD repeat G protein beta family. As to quaternary structure, g proteins are composed of 3 units, alpha, beta and gamma. In terms of tissue distribution, strongly expressed in lung and placenta, whereas it is weakly expressed in brain and heart. Abundantly expressed in the axons and Schwann cells of peripheral nerves.

Its function is as follows. Guanine nucleotide-binding proteins (G proteins) are involved as a modulator or transducer in various transmembrane signaling systems. The beta and gamma chains are required for the GTPase activity, for replacement of GDP by GTP, and for G protein-effector interaction. The chain is Guanine nucleotide-binding protein subunit beta-4 (GNB4) from Homo sapiens (Human).